The following is a 369-amino-acid chain: DNA replication and repair protein RecF (369 aa).

Position 30–37 (30–37) interacts with ATP; that stretch reads GDNGSGKT.

This sequence belongs to the RecF family.

It localises to the cytoplasm. Its function is as follows. The RecF protein is involved in DNA metabolism; it is required for DNA replication and normal SOS inducibility. RecF binds preferentially to single-stranded, linear DNA. It also seems to bind ATP. The chain is DNA replication and repair protein RecF from Pseudomonas aeruginosa (strain LESB58).